Reading from the N-terminus, the 213-residue chain is High frequency lysogenization protein HflD homolog (213 aa).

Residues 79–126 (QGLNAELTRYTLSLMVLERKLSSAKGALDTLGNRINGLQRQLEHFDLQ) are a coiled coil.

It belongs to the HflD family.

It is found in the cytoplasm. It localises to the cell inner membrane. The sequence is that of High frequency lysogenization protein HflD homolog from Shigella dysenteriae serotype 1 (strain Sd197).